A 238-amino-acid polypeptide reads, in one-letter code: uncharacterized protein (238 aa).

This sequence belongs to the chlamydial CPn_0658/CT_538/TC_0825 family.

This is an uncharacterized protein from Chlamydia muridarum (strain MoPn / Nigg).